The sequence spans 156 residues: Ribosome maturation factor RimP (156 aa).

It belongs to the RimP family.

It is found in the cytoplasm. Its function is as follows. Required for maturation of 30S ribosomal subunits. The sequence is that of Ribosome maturation factor RimP from Bacillus mycoides (strain KBAB4) (Bacillus weihenstephanensis).